The chain runs to 99 residues: Protein translation factor SUI1 homolog (99 aa).

It belongs to the SUI1 family.

This chain is Protein translation factor SUI1 homolog, found in Picrophilus torridus (strain ATCC 700027 / DSM 9790 / JCM 10055 / NBRC 100828 / KAW 2/3).